The sequence spans 1071 residues: ATP-dependent helicase/deoxyribonuclease subunit B (1071 aa).

It belongs to the helicase family. AddB/RexB type 2 subfamily. As to quaternary structure, heterodimer of AddA and RexB. The cofactor is Mg(2+).

Functionally, the heterodimer acts as both an ATP-dependent DNA helicase and an ATP-dependent, dual-direction single-stranded exonuclease. Recognizes the chi site generating a DNA molecule suitable for the initiation of homologous recombination. This subunit has 5' -&gt; 3' nuclease activity but not helicase activity. This chain is ATP-dependent helicase/deoxyribonuclease subunit B, found in Streptococcus pyogenes serotype M4 (strain MGAS10750).